The chain runs to 119 residues: Ribosome-binding factor A (119 aa).

Belongs to the RbfA family. As to quaternary structure, monomer. Binds 30S ribosomal subunits, but not 50S ribosomal subunits or 70S ribosomes.

It localises to the cytoplasm. Its function is as follows. One of several proteins that assist in the late maturation steps of the functional core of the 30S ribosomal subunit. Associates with free 30S ribosomal subunits (but not with 30S subunits that are part of 70S ribosomes or polysomes). Required for efficient processing of 16S rRNA. May interact with the 5'-terminal helix region of 16S rRNA. This Mycoplasmoides gallisepticum (strain R(low / passage 15 / clone 2)) (Mycoplasma gallisepticum) protein is Ribosome-binding factor A.